A 375-amino-acid chain; its full sequence is Probable protein-glutamate methylesterase BB_0415 (375 aa).

The region spanning 6-120 (SVLIIEYFAV…SHEIKKEQII (115 aa)) is the Response regulatory domain. The CheB-type methylesterase domain maps to 183 to 375 (KLRKFDIIAI…KLLKAILINS (193 aa)). Residues S195, H221, and D317 contribute to the active site.

It carries out the reaction [protein]-L-glutamate 5-O-methyl ester + H2O = L-glutamyl-[protein] + methanol + H(+). The polypeptide is Probable protein-glutamate methylesterase BB_0415 (Borreliella burgdorferi (strain ATCC 35210 / DSM 4680 / CIP 102532 / B31) (Borrelia burgdorferi)).